A 161-amino-acid chain; its full sequence is 2-C-methyl-D-erythritol 2,4-cyclodiphosphate synthase (161 aa).

A divalent metal cation-binding residues include Asp-14 and His-16. 4-CDP-2-C-methyl-D-erythritol 2-phosphate-binding positions include 14–16 (DVH) and 40–41 (HS). His-48 lines the a divalent metal cation pocket. Residues 62-64 (DLG), Phe-142, and Arg-145 each bind 4-CDP-2-C-methyl-D-erythritol 2-phosphate.

Belongs to the IspF family. In terms of assembly, homotrimer. Requires a divalent metal cation as cofactor.

The enzyme catalyses 4-CDP-2-C-methyl-D-erythritol 2-phosphate = 2-C-methyl-D-erythritol 2,4-cyclic diphosphate + CMP. The protein operates within isoprenoid biosynthesis; isopentenyl diphosphate biosynthesis via DXP pathway; isopentenyl diphosphate from 1-deoxy-D-xylulose 5-phosphate: step 4/6. Functionally, involved in the biosynthesis of isopentenyl diphosphate (IPP) and dimethylallyl diphosphate (DMAPP), two major building blocks of isoprenoid compounds. Catalyzes the conversion of 4-diphosphocytidyl-2-C-methyl-D-erythritol 2-phosphate (CDP-ME2P) to 2-C-methyl-D-erythritol 2,4-cyclodiphosphate (ME-CPP) with a corresponding release of cytidine 5-monophosphate (CMP). This Acidothermus cellulolyticus (strain ATCC 43068 / DSM 8971 / 11B) protein is 2-C-methyl-D-erythritol 2,4-cyclodiphosphate synthase.